Reading from the N-terminus, the 84-residue chain is Trefoil factor 1 (84 aa).

An N-terminal signal peptide occupies residues 1 to 24; it reads MATMENKVICALVLVSMLALGTLA. The region spanning 29-72 is the P-type domain; sequence ETCTVAPRERQNCGFPGVTPSQCANKGCCFDDTVRGVPWCFYPN. 3 disulfides stabilise this stretch: Cys-31/Cys-57, Cys-41/Cys-56, and Cys-51/Cys-68.

In terms of assembly, heterodimer with GKN2; disulfide linked. Found in stomach, with highest levels in the upper gastric mucosal cells (at protein level). Detected in goblet cells of the small and large intestine and rectum, small submucosal glands in the esophagus, mucous acini of the sublingual gland, submucosal glands of the trachea, and epithelial cells lining the exocrine pancreatic ducts but not in the remainder of the pancreas (at protein level). Scattered expression is detected in the epithelial cells of the gallbladder and submucosal glands of the vagina, and weak expression is observed in the bronchial goblet cells of the pseudostratified epithelia in the respiratory system (at protein level). Detected in urine (at protein level). Strongly expressed in breast cancer but at low levels in normal mammary tissue. It is regulated by estrogen in MCF-7 cells. Strong expression found in normal gastric mucosa and in the regenerative tissues surrounding ulcerous lesions of gastrointestinal tract, but lower expression found in gastric cancer (at protein level).

It is found in the secreted. In terms of biological role, stabilizer of the mucous gel overlying the gastrointestinal mucosa that provides a physical barrier against various noxious agents. May inhibit the growth of calcium oxalate crystals in urine. This Homo sapiens (Human) protein is Trefoil factor 1 (TFF1).